The primary structure comprises 246 residues: Probable septum site-determining protein MinC (246 aa).

Belongs to the MinC family. As to quaternary structure, interacts with MinD and FtsZ.

Cell division inhibitor that blocks the formation of polar Z ring septums. Rapidly oscillates between the poles of the cell to destabilize FtsZ filaments that have formed before they mature into polar Z rings. Prevents FtsZ polymerization. In Pseudomonas savastanoi pv. phaseolicola (strain 1448A / Race 6) (Pseudomonas syringae pv. phaseolicola (strain 1448A / Race 6)), this protein is Probable septum site-determining protein MinC.